Consider the following 391-residue polypeptide: Ectodysplasin-A (391 aa).

Basic and acidic residues predominate over residues 1–21 (MGYPEVERREPLPAAAPRERG). The segment at 1 to 28 (MGYPEVERREPLPAAAPRERGSQGCGCR) is disordered. The Cytoplasmic portion of the chain corresponds to 1 to 41 (MGYPEVERREPLPAAAPRERGSQGCGCRGAPARAGEGNSCR). Residues 42–62 (LFLGFFGLSLALHLLTLCCYL) form a helical; Signal-anchor for type II membrane protein membrane-spanning segment. At 63–391 (ELRSELRRER…AIRLGEAPAS (329 aa)) the chain is on the extracellular side. Disordered stretches follow at residues 73–130 (GAES…SQDG) and 145–245 (SYSE…GTRE). The span at 76-96 (SRFSGPGTPGTSGTLSSPGGL) shows a compositional bias: low complexity. Positions 180 to 229 (GPPGPNGPPGPPGPPGPQGPPGIPGIPGIPGTTVMGPPGPPGPPGPQGPP) constitute a Collagen-like domain. 2 stretches are compositionally biased toward pro residues: residues 181–203 (PPGPNGPPGPPGPPGPQGPPGIP) and 216–228 (PPGPPGPPGPQGP). The THD domain occupies 249-385 (AVVHLQGQGS…HTTFFGAIRL (137 aa)). Residue N313 is glycosylated (N-linked (GlcNAc...) asparagine). The cysteines at positions 332 and 346 are disulfide-linked. An N-linked (GlcNAc...) asparagine glycan is attached at N372.

Belongs to the tumor necrosis factor family. In terms of assembly, homotrimer. The homotrimers may then dimerize and form higher-order oligomers. In terms of processing, N-glycosylated. Post-translationally, processing by furin produces a secreted form.

It is found in the cell membrane. It localises to the secreted. In terms of biological role, cytokine which is involved in epithelial-mesenchymal signaling during morphogenesis of ectodermal organs. Functions as a ligand activating the DEATH-domain containing receptors EDAR and EDA2R. Isoform A1 binds only to the receptor EDAR, while isoform A2 binds exclusively to the receptor EDA2R. May also play a role in cell adhesion. Functionally, isoform A1 binds only to the receptor EDAR, while isoform A2 binds exclusively to the receptor EDA2R. Isoform A2 binds exclusively to the receptor EDA2R. The protein is Ectodysplasin-A (EDA) of Bos taurus (Bovine).